Here is a 157-residue protein sequence, read N- to C-terminus: Eukaryotic translation initiation factor 5A-1 (157 aa).

Lys52 carries the hypusine modification. Phosphoserine occurs at positions 75 and 77. Residue Thr78 is modified to Phosphothreonine.

Belongs to the eIF-5A family. In terms of processing, lys-52 undergoes hypusination, a unique post-translational modification that consists in the addition of a butylamino group from spermidine to lysine side chain, leading to the formation of the unusual amino acid hypusine. eIF-5As are the only known proteins to undergo this modification, which is essential for their function.

It is found in the cytoplasm. In terms of biological role, translation factor that promotes translation elongation and termination, particularly upon ribosome stalling at specific amino acid sequence contexts. Binds between the exit (E) and peptidyl (P) site of the ribosome and promotes rescue of stalled ribosome: specifically required for efficient translation of polyproline-containing peptides as well as other motifs that stall the ribosome. Acts as a ribosome quality control (RQC) cofactor by joining the RQC complex to facilitate peptidyl transfer during CAT tailing step. This is Eukaryotic translation initiation factor 5A-1 (tif51a) from Schizosaccharomyces pombe (strain 972 / ATCC 24843) (Fission yeast).